The primary structure comprises 418 residues: MTQLPGLLDTEAIRKDFPILDRQVHDGHKLVYLDNAATSQKPRQVLDALSEYYERYNANVHRGVHVLAEEATALYEGARDKVAEFINAPSRDEVIFTKNASESLNLVANMLGWADDPYRVDHETEIVITEMEHHSNIVPWQLLAQRTGAKLRWFGLTDDGRLDLSNIDEVITEKTKVVSFVLVSNILGTQNPVEAIVRRAQEVGALVCIDASQAAPHMPLDVQALQADFVAFTGHKMCGPTGIGVLWGRQELLEDLPPFLGGGEMIETVSMHSSTYAPAPHKFEAGTPPVAQAVGLGAAIDYLNSIGMDKILAHEHALTEYAVKRLLEVPDLRIIGPTTAEERGAAISFTLGDIHPHDVGQVLDEQGIAVRVGHHCARPVCLRYGIPATTRASFYLYSTPAEIDALVDGLEHVRNFFG.

Lys-236 is modified (N6-(pyridoxal phosphate)lysine). The Cysteine persulfide intermediate role is filled by Cys-376.

Belongs to the class-V pyridoxal-phosphate-dependent aminotransferase family. Csd subfamily. Pyridoxal 5'-phosphate serves as cofactor.

The enzyme catalyses (sulfur carrier)-H + L-cysteine = (sulfur carrier)-SH + L-alanine. Catalyzes the removal of elemental sulfur and selenium atoms from L-cysteine, L-cystine, L-selenocysteine, and L-selenocystine to produce L-alanine. This is Probable cysteine desulfurase (csd) from Streptomyces coelicolor (strain ATCC BAA-471 / A3(2) / M145).